Reading from the N-terminus, the 191-residue chain is GDP-mannose pyrophosphatase (191 aa).

GDP-alpha-D-mannose is bound by residues Y17, 38-40, R67, and 85-87; these read KRE and AGL. Positions 43–180 constitute a Nudix hydrolase domain; the sequence is DRGNGAAVLL…VIRDAKTVLL (138 aa). Mg(2+) contacts are provided by A85, E100, and E104. Positions 86-106 match the Nudix box motif; that stretch reads GLLDDDEPEVCIRKEAIEETG. GDP-alpha-D-mannose-binding positions include E104, E127, 150–151, and K176; that span reads DE. E151 provides a ligand contact to Mg(2+).

The protein belongs to the Nudix hydrolase family. NudK subfamily. In terms of assembly, homodimer. Mg(2+) is required as a cofactor.

The enzyme catalyses GDP-alpha-D-mannose + H2O = alpha-D-mannose 1-phosphate + GMP + 2 H(+). In terms of biological role, nucleoside diphosphate sugar hydrolase that hydrolyzes GDP-mannose as its preferred substrate, yielding GMP and mannose-1-phosphate. The polypeptide is GDP-mannose pyrophosphatase (nudK) (Cronobacter sakazakii (strain ATCC BAA-894) (Enterobacter sakazakii)).